The sequence spans 511 residues: Probable cytosol aminopeptidase (511 aa).

Positions 255 and 260 each coordinate Mn(2+). Residue Lys-267 is part of the active site. Residues Asp-278, Asp-337, and Glu-339 each contribute to the Mn(2+) site. Residue Arg-341 is part of the active site. The interval 485 to 511 (GAAQAVSPKKAARKEPGAAARKARSAQ) is disordered.

It belongs to the peptidase M17 family. Requires Mn(2+) as cofactor.

It localises to the cytoplasm. It carries out the reaction Release of an N-terminal amino acid, Xaa-|-Yaa-, in which Xaa is preferably Leu, but may be other amino acids including Pro although not Arg or Lys, and Yaa may be Pro. Amino acid amides and methyl esters are also readily hydrolyzed, but rates on arylamides are exceedingly low.. The catalysed reaction is Release of an N-terminal amino acid, preferentially leucine, but not glutamic or aspartic acids.. Presumably involved in the processing and regular turnover of intracellular proteins. Catalyzes the removal of unsubstituted N-terminal amino acids from various peptides. In Variovorax paradoxus (strain S110), this protein is Probable cytosol aminopeptidase.